The following is a 29-amino-acid chain: Cyclotide cter-L (29 aa).

Positions 1-29 (HEPCGESCVFIPCITTVVGCSCKNKVCYD) form a cross-link, cyclopeptide (His-Asp). 3 disulfides stabilise this stretch: cysteine 4-cysteine 20, cysteine 8-cysteine 22, and cysteine 13-cysteine 27.

Post-translationally, contains 3 disulfide bonds. In terms of processing, this is a cyclic peptide.

Functionally, probably participates in a plant defense mechanism. The sequence is that of Cyclotide cter-L from Clitoria ternatea (Butterfly pea).